A 244-amino-acid polypeptide reads, in one-letter code: 1-(5-phosphoribosyl)-5-[(5-phosphoribosylamino)methylideneamino] imidazole-4-carboxamide isomerase (244 aa).

Aspartate 11 serves as the catalytic Proton acceptor. The active-site Proton donor is the aspartate 132.

It belongs to the HisA/HisF family.

The protein resides in the cytoplasm. The catalysed reaction is 1-(5-phospho-beta-D-ribosyl)-5-[(5-phospho-beta-D-ribosylamino)methylideneamino]imidazole-4-carboxamide = 5-[(5-phospho-1-deoxy-D-ribulos-1-ylimino)methylamino]-1-(5-phospho-beta-D-ribosyl)imidazole-4-carboxamide. It functions in the pathway amino-acid biosynthesis; L-histidine biosynthesis; L-histidine from 5-phospho-alpha-D-ribose 1-diphosphate: step 4/9. The protein is 1-(5-phosphoribosyl)-5-[(5-phosphoribosylamino)methylideneamino] imidazole-4-carboxamide isomerase of Sphingopyxis alaskensis (strain DSM 13593 / LMG 18877 / RB2256) (Sphingomonas alaskensis).